We begin with the raw amino-acid sequence, 266 residues long: Glucosamine-6-phosphate deaminase (266 aa).

The active-site Proton acceptor; for enolization step is Asp-72. The active-site For ring-opening step is Asp-141. The active-site Proton acceptor; for ring-opening step is His-143. Glu-148 serves as the catalytic For ring-opening step.

The protein belongs to the glucosamine/galactosamine-6-phosphate isomerase family. NagB subfamily. Homohexamer.

The enzyme catalyses alpha-D-glucosamine 6-phosphate + H2O = beta-D-fructose 6-phosphate + NH4(+). It participates in amino-sugar metabolism; N-acetylneuraminate degradation; D-fructose 6-phosphate from N-acetylneuraminate: step 5/5. Its activity is regulated as follows. Allosterically activated by N-acetylglucosamine 6-phosphate (GlcNAc6P). Catalyzes the reversible isomerization-deamination of glucosamine 6-phosphate (GlcN6P) to form fructose 6-phosphate (Fru6P) and ammonium ion. In Klebsiella pneumoniae (strain 342), this protein is Glucosamine-6-phosphate deaminase.